The primary structure comprises 69 residues: UPF0150 protein AF_1072 (69 aa).

This sequence belongs to the UPF0150 family.

The polypeptide is UPF0150 protein AF_1072 (Archaeoglobus fulgidus (strain ATCC 49558 / DSM 4304 / JCM 9628 / NBRC 100126 / VC-16)).